The primary structure comprises 257 residues: Global transcriptional regulator CodY (257 aa).

The tract at residues 1–155 (MSLLSKTREL…AATVIGMEIL (155 aa)) is GAF domain. A DNA-binding region (H-T-H motif) is located at residues 203–222 (ASKVADGVGITRSVIVNALR).

Belongs to the CodY family.

It is found in the cytoplasm. DNA-binding global transcriptional regulator which is involved in the adaptive response to starvation and acts by directly or indirectly controlling the expression of numerous genes in response to nutrient availability. During rapid exponential growth, CodY is highly active and represses genes whose products allow adaptation to nutrient depletion. This is Global transcriptional regulator CodY from Staphylococcus aureus (strain bovine RF122 / ET3-1).